Consider the following 275-residue polypeptide: Chlorobenzene dihydrodiol dehydrogenase (275 aa).

The active-site Proton acceptor is Tyr155.

The protein belongs to the short-chain dehydrogenases/reductases (SDR) family.

The catalysed reaction is (1R,2R)-3-chlorocyclohexa-3,5-diene-1,2-diol + NAD(+) = 3-chlorocatechol + NADH + H(+). The protein operates within aromatic compound metabolism. Its function is as follows. Can transform various dihydrodiols of chlorobenzenes and chlorotoluenes into the respective catechols. This chain is Chlorobenzene dihydrodiol dehydrogenase, found in Cupriavidus sp. (strain PS12).